The following is a 101-amino-acid chain: Small ribosomal subunit protein bS18c (101 aa).

Belongs to the bacterial ribosomal protein bS18 family. Part of the 30S ribosomal subunit.

Its subcellular location is the plastid. It is found in the chloroplast. This Morus indica (Mulberry) protein is Small ribosomal subunit protein bS18c.